The chain runs to 679 residues: Glycine--tRNA ligase beta subunit (679 aa).

This sequence belongs to the class-II aminoacyl-tRNA synthetase family. As to quaternary structure, tetramer of two alpha and two beta subunits.

The protein localises to the cytoplasm. It catalyses the reaction tRNA(Gly) + glycine + ATP = glycyl-tRNA(Gly) + AMP + diphosphate. In Bacillus subtilis (strain 168), this protein is Glycine--tRNA ligase beta subunit (glyS).